The following is a 354-amino-acid chain: Guanine nucleotide-binding protein G(i) subunit alpha-3 (354 aa).

G2 carries the N-myristoyl glycine lipid modification. C3 carries the S-palmitoyl cysteine lipid modification. In terms of domain architecture, G-alpha spans 32–354 (KEVKLLLLGA…KNNLKECGLY (323 aa)). Positions 35-48 (KLLLLGAGESGKST) are G1 motif. G42, E43, S44, G45, K46, S47, T48, D150, S151, L175, R176, T177, R178, V179, K180, T181, V201, G203, N269, K270, D272, L273, C325, A326, and T327 together coordinate GTP. S47 contacts Mg(2+). The segment at 173-181 (DVLRTRVKT) is G2 motif. T181 provides a ligand contact to Mg(2+). Residues 196–205 (FKMFDVGGQR) form a G3 motif region. Positions 265–272 (ILFLNKKD) are G4 motif. The G5 motif stretch occupies residues 324–329 (TCATDT).

This sequence belongs to the G-alpha family. G(i/o/t/z) subfamily. Heterotrimeric G proteins are composed of 3 units; alpha, beta and gamma. The alpha subunit contains the guanine nucleotide binding site. GTP binding causes dissociation of the heterotrimer, liberating the individual subunits so that they can interact with downstream effector proteins. Forms a complex with CCDC88A/GIV and EGFR which leads to enhanced EGFR signaling and triggering of cell migration; ligand stimulation is required for recruitment of GNAI3 to the complex. Interacts (inactive GDP-bound form) with CCDC88A/GIV (via GBA motif); the interaction leads to activation of GNAI3. Interacts (inactive GDP-bound form) with CCDC88C/DAPLE (via GBA motif); the interaction leads to activation of GNAI3. Interacts (inactive GDP-bound form) with NUCB1 (via GBA motif) and NUCB2 (via GBA motif); the interaction leads to activation of GNAI3. Interacts (inactive GDP-bound form) with PLCD4 (via GBA motif); the interaction leads to activation of GNAI3. Interacts with INSR; the interaction is probably mediated by CCDC88A/GIV. Interacts with GPSM1. Interacts (GDP-bound form) with GPSM2 (via GoLoco domains). Does not interact with RGS2. Interacts with RGS8 and RGS10; this strongly enhances the intrinsic GTPase activity. Interacts with RGS16; this strongly enhances the intrinsic GTPase activity. Interacts with RGS12. Interacts (via active GTP- or inactive GDP-bound form) with RGS14. Interacts (via active GTP-bound form) with TRPC5 (via ANK repeats) in a homotetrameric ion channel; the interaction is direct and activates the channel activity.

It localises to the cytoplasm. Its subcellular location is the cell membrane. It is found in the cytoskeleton. The protein resides in the microtubule organizing center. The protein localises to the centrosome. In terms of biological role, heterotrimeric guanine nucleotide-binding proteins (G proteins) function as transducers downstream of G protein-coupled receptors (GPCRs) in numerous signaling cascades. The alpha chain contains the guanine nucleotide binding site and alternates between an active, GTP-bound state and an inactive, GDP-bound state. Signaling by an activated GPCR promotes GDP release and GTP binding. The alpha subunit has a low GTPase activity that converts bound GTP to GDP, thereby terminating the signal. Both GDP release and GTP hydrolysis are modulated by numerous regulatory proteins. Signaling is mediated via effector proteins, such as adenylate cyclase. Inhibits adenylate cyclase activity, leading to decreased intracellular cAMP levels. Stimulates the activity of receptor-regulated K(+) channels. The active GTP-bound form prevents the association of RGS14 with centrosomes and is required for the translocation of RGS14 from the cytoplasm to the plasma membrane. May play a role in cell division. The active GTP-bound form activates the calcium permeant TRPC5 ion channels. The polypeptide is Guanine nucleotide-binding protein G(i) subunit alpha-3 (GNAI3) (Cricetulus griseus (Chinese hamster)).